We begin with the raw amino-acid sequence, 211 residues long: Large ribosomal subunit protein eL13 (211 aa).

The residue at position 16 (Lys-16) is an N6-acetyllysine. 3 positions are modified to phosphoserine: Ser-52, Ser-77, and Ser-106. Glycyl lysine isopeptide (Lys-Gly) (interchain with G-Cter in SUMO2) cross-links involve residues Lys-123 and Lys-145. Residue Lys-174 forms a Glycyl lysine isopeptide (Lys-Gly) (interchain with G-Cter in SUMO1); alternate linkage. Residues Lys-174 and Lys-177 each participate in a glycyl lysine isopeptide (Lys-Gly) (interchain with G-Cter in SUMO2); alternate cross-link. At Lys-177 the chain carries N6-acetyllysine; alternate.

Belongs to the eukaryotic ribosomal protein eL13 family. As to quaternary structure, component of the 60S large ribosomal subunit (LSU). In terms of tissue distribution, higher levels of expression in benign breast lesions than in carcinomas.

The protein localises to the cytoplasm. Its function is as follows. Component of the ribosome, a large ribonucleoprotein complex responsible for the synthesis of proteins in the cell. The small ribosomal subunit (SSU) binds messenger RNAs (mRNAs) and translates the encoded message by selecting cognate aminoacyl-transfer RNA (tRNA) molecules. The large subunit (LSU) contains the ribosomal catalytic site termed the peptidyl transferase center (PTC), which catalyzes the formation of peptide bonds, thereby polymerizing the amino acids delivered by tRNAs into a polypeptide chain. The nascent polypeptides leave the ribosome through a tunnel in the LSU and interact with protein factors that function in enzymatic processing, targeting, and the membrane insertion of nascent chains at the exit of the ribosomal tunnel. As part of the LSU, it is probably required for its formation and the maturation of rRNAs. Plays a role in bone development. The protein is Large ribosomal subunit protein eL13 (RPL13) of Homo sapiens (Human).